Reading from the N-terminus, the 378-residue chain is tRNA-specific 2-thiouridylase MnmA (378 aa).

ATP is bound by residues 9–16 and M35; that span reads GVSGGVDS. Residues 94–96 are interaction with target base in tRNA; it reads NPD. C99 acts as the Nucleophile in catalysis. A disulfide bridge links C99 with C195. G123 provides a ligand contact to ATP. The tract at residues 145–147 is interaction with tRNA; the sequence is KDQ. The active-site Cysteine persulfide intermediate is the C195. Residues 307-308 form an interaction with tRNA region; it reads RY.

Belongs to the MnmA/TRMU family.

It is found in the cytoplasm. The enzyme catalyses S-sulfanyl-L-cysteinyl-[protein] + uridine(34) in tRNA + AH2 + ATP = 2-thiouridine(34) in tRNA + L-cysteinyl-[protein] + A + AMP + diphosphate + H(+). Its function is as follows. Catalyzes the 2-thiolation of uridine at the wobble position (U34) of tRNA, leading to the formation of s(2)U34. The polypeptide is tRNA-specific 2-thiouridylase MnmA (Xanthomonas campestris pv. campestris (strain 8004)).